The primary structure comprises 69 residues: uncharacterized protein (69 aa).

The segment at 21–42 (MYAANKKSDARRRGKVGKEQWE) is disordered. The stretch at 35–69 (KVGKEQWEKEMEQYNIQKAQFEKELKEKKEKELKK) forms a coiled coil.

This is an uncharacterized protein from Acheta domesticus (House cricket).